A 281-amino-acid polypeptide reads, in one-letter code: INSIG family protein (281 aa).

Residues methionine 1–phenylalanine 93 are Cytoplasmic-facing. Phosphoserine is present on serine 28. Residues phenylalanine 94–leucine 120 form a helical membrane-spanning segment. Over proline 121 to proline 134 the chain is Lumenal. The chain crosses the membrane as a helical span at residues proline 135–proline 159. Residues leucine 160–serine 170 lie on the Cytoplasmic side of the membrane. A helical transmembrane segment spans residues serine 171–leucine 186. The Lumenal segment spans residues leucine 187 to serine 189. A helical membrane pass occupies residues methionine 190 to isoleucine 215. The Cytoplasmic portion of the chain corresponds to phenylalanine 216 to asparagine 221. Residues glycine 222–isoleucine 256 traverse the membrane as a helical segment. Topologically, residues glutamine 257–leucine 260 are lumenal. The helical transmembrane segment at tryptophan 261 to phenylalanine 281 threads the bilayer.

This sequence belongs to the INSIG family.

The protein resides in the endoplasmic reticulum membrane. This chain is INSIG family protein (ins1), found in Schizosaccharomyces pombe (strain 972 / ATCC 24843) (Fission yeast).